The following is a 611-amino-acid chain: ATP-dependent zinc metalloprotease FtsH (611 aa).

Residue M1 is a topological domain, cytoplasmic. Residues V2 to F22 form a helical membrane-spanning segment. Residues N23–L98 are Extracellular-facing. A helical transmembrane segment spans residues F99 to F119. The Cytoplasmic segment spans residues M120 to K611. G192–T199 serves as a coordination point for ATP. H414 provides a ligand contact to Zn(2+). Residue E415 is part of the active site. Zn(2+) is bound by residues H418 and D492.

This sequence in the central section; belongs to the AAA ATPase family. It in the C-terminal section; belongs to the peptidase M41 family. As to quaternary structure, homohexamer. Requires Zn(2+) as cofactor.

It is found in the cell membrane. Acts as a processive, ATP-dependent zinc metallopeptidase for both cytoplasmic and membrane proteins. Plays a role in the quality control of integral membrane proteins. This Buchnera aphidicola subsp. Acyrthosiphon pisum (strain APS) (Acyrthosiphon pisum symbiotic bacterium) protein is ATP-dependent zinc metalloprotease FtsH.